Reading from the N-terminus, the 138-residue chain is Holo-[acyl-carrier-protein] synthase (138 aa).

Residues Asp-8 and Glu-57 each coordinate Mg(2+).

The protein belongs to the P-Pant transferase superfamily. AcpS family. The cofactor is Mg(2+).

The protein localises to the cytoplasm. The enzyme catalyses apo-[ACP] + CoA = holo-[ACP] + adenosine 3',5'-bisphosphate + H(+). Functionally, transfers the 4'-phosphopantetheine moiety from coenzyme A to a Ser of acyl-carrier-protein. The chain is Holo-[acyl-carrier-protein] synthase from Phenylobacterium zucineum (strain HLK1).